A 283-amino-acid chain; its full sequence is Pantothenate synthetase (283 aa).

30-37 lines the ATP pocket; that stretch reads MGNLHDGH. His-37 acts as the Proton donor in catalysis. Position 61 (Gln-61) interacts with (R)-pantoate. Residue Gln-61 participates in beta-alanine binding. 149–152 contacts ATP; the sequence is GEKD. Gln-155 is a binding site for (R)-pantoate. 186-189 contributes to the ATP binding site; that stretch reads LSSR.

The protein belongs to the pantothenate synthetase family. As to quaternary structure, homodimer.

It localises to the cytoplasm. It catalyses the reaction (R)-pantoate + beta-alanine + ATP = (R)-pantothenate + AMP + diphosphate + H(+). The protein operates within cofactor biosynthesis; (R)-pantothenate biosynthesis; (R)-pantothenate from (R)-pantoate and beta-alanine: step 1/1. Its function is as follows. Catalyzes the condensation of pantoate with beta-alanine in an ATP-dependent reaction via a pantoyl-adenylate intermediate. This is Pantothenate synthetase from Escherichia coli O17:K52:H18 (strain UMN026 / ExPEC).